Here is a 463-residue protein sequence, read N- to C-terminus: Phosphomethylpyrimidine synthase (463 aa).

Substrate contacts are provided by residues Asn-80, Met-109, Tyr-138, His-173, 193–195 (SRG), 234–237 (DGLR), and Glu-273. His-277 contacts Zn(2+). Position 300 (Tyr-300) interacts with substrate. Residue His-341 coordinates Zn(2+). [4Fe-4S] cluster is bound by residues Cys-421, Cys-424, and Cys-429.

This sequence belongs to the ThiC family. Homodimer. [4Fe-4S] cluster serves as cofactor.

The enzyme catalyses 5-amino-1-(5-phospho-beta-D-ribosyl)imidazole + S-adenosyl-L-methionine = 4-amino-2-methyl-5-(phosphooxymethyl)pyrimidine + CO + 5'-deoxyadenosine + formate + L-methionine + 3 H(+). The protein operates within cofactor biosynthesis; thiamine diphosphate biosynthesis. Catalyzes the synthesis of the hydroxymethylpyrimidine phosphate (HMP-P) moiety of thiamine from aminoimidazole ribotide (AIR) in a radical S-adenosyl-L-methionine (SAM)-dependent reaction. The protein is Phosphomethylpyrimidine synthase of Anaeromyxobacter sp. (strain K).